The sequence spans 241 residues: tRNA (guanine-N(7)-)-methyltransferase (241 aa).

The S-adenosyl-L-methionine site is built by Gly-61, Glu-84, Arg-86, Asn-117, Ala-118, and Leu-137. Asp-140 is an active-site residue. An alphaC helix region spans residues 141 to 149 (PHFKKTKHK). Thr-215 and Glu-217 together coordinate S-adenosyl-L-methionine. Positions 215 to 223 (TEEGKKVQR) are alpha6 helix.

Belongs to the class I-like SAM-binding methyltransferase superfamily. TrmB family. Catalytic component of the METTL1-WDR4 complex, composed of mettl1 and wdr4.

It is found in the nucleus. It carries out the reaction guanosine(46) in tRNA + S-adenosyl-L-methionine = N(7)-methylguanosine(46) in tRNA + S-adenosyl-L-homocysteine. It catalyses the reaction a guanosine in mRNA + S-adenosyl-L-methionine = an N(7)-methylguanosine in mRNA + S-adenosyl-L-homocysteine. The catalysed reaction is a guanosine in miRNA + S-adenosyl-L-methionine = an N(7)-methylguanosine in miRNA + S-adenosyl-L-homocysteine. It functions in the pathway tRNA modification; N(7)-methylguanine-tRNA biosynthesis. Catalytic component of METTL1-WDR4 methyltransferase complex that mediates the formation of N(7)-methylguanine in a subset of RNA species, such as tRNAs, mRNAs and microRNAs (miRNAs). Catalyzes the formation of N(7)-methylguanine at position 46 (m7G46) in a large subset of tRNAs that contain the 5'-RAGGU-3' motif within the variable loop. M7G46 interacts with C13-G22 in the D-loop to stabilize tRNA tertiary structure and protect tRNAs from decay. Also acts as a methyltransferase for a subset of internal N(7)-methylguanine in mRNAs. Internal N(7)-methylguanine methylation of mRNAs in response to stress promotes their relocalization to stress granules, thereby suppressing their translation. Also methylates a specific subset of miRNAs. In Danio rerio (Zebrafish), this protein is tRNA (guanine-N(7)-)-methyltransferase (mettl1).